We begin with the raw amino-acid sequence, 521 residues long: Lipid-translocating exporter-like protein RTA1 (521 aa).

A run of 7 helical transmembrane segments spans residues 186–206 (GAPI…SWQC), 211–231 (AWKL…GYAL), 249–269 (LALF…LELA), 292–312 (VTAF…SGVS), 332–352 (LVAL…SVLF), 371–391 (TLMT…FRLV), and 418–438 (EAYF…LWNV). The tract at residues 493–521 (THSQPQELYENPNGNGHKKFRLGNGGRAT) is disordered.

Belongs to the lipid-translocating exporter (LTE) (TC 9.A.26.1) family.

It localises to the membrane. Functionally, lipid-translocating exporter-like protein; part of the gene cluster that mediates the biosynthesis of phomenoic acid, a long chain aliphatic carboxylic acid that does not appear to be essential for pathogenicity but may play a role in allowing to outcompete other fungi in the environmental niche via its antifungal properties. This is Lipid-translocating exporter-like protein RTA1 from Leptosphaeria maculans (strain JN3 / isolate v23.1.3 / race Av1-4-5-6-7-8) (Blackleg fungus).